The primary structure comprises 189 residues: Threonylcarbamoyl-AMP synthase (189 aa).

The YrdC-like domain occupies 3–189 (TTSVTEAAEC…NALTGEVIRP (187 aa)).

It belongs to the SUA5 family. TsaC subfamily.

The protein resides in the cytoplasm. The catalysed reaction is L-threonine + hydrogencarbonate + ATP = L-threonylcarbamoyladenylate + diphosphate + H2O. Functionally, required for the formation of a threonylcarbamoyl group on adenosine at position 37 (t(6)A37) in tRNAs that read codons beginning with adenine. Catalyzes the conversion of L-threonine, HCO(3)(-)/CO(2) and ATP to give threonylcarbamoyl-AMP (TC-AMP) as the acyladenylate intermediate, with the release of diphosphate. The polypeptide is Threonylcarbamoyl-AMP synthase (Acinetobacter baumannii (strain ACICU)).